The sequence spans 170 residues: Lipoprotein signal peptidase (170 aa).

The next 3 helical transmembrane spans lie at 12-32 (WYWV…WVLS), 67-87 (WQRW…SVWL), and 94-113 (MWRL…GNLI). Active-site residues include D123 and D141. Residues 139-159 (IADSAICVGAGLIILDSFVAG) traverse the membrane as a helical segment.

The protein belongs to the peptidase A8 family.

The protein localises to the cell inner membrane. It carries out the reaction Release of signal peptides from bacterial membrane prolipoproteins. Hydrolyzes -Xaa-Yaa-Zaa-|-(S,diacylglyceryl)Cys-, in which Xaa is hydrophobic (preferably Leu), and Yaa (Ala or Ser) and Zaa (Gly or Ala) have small, neutral side chains.. It participates in protein modification; lipoprotein biosynthesis (signal peptide cleavage). In terms of biological role, this protein specifically catalyzes the removal of signal peptides from prolipoproteins. This chain is Lipoprotein signal peptidase, found in Shewanella pealeana (strain ATCC 700345 / ANG-SQ1).